The primary structure comprises 415 residues: MLRFLKPFPLRFGKRFYSKVPPVTNHERILPKQPSFPTAPAQNEIATLTIRNGPIFHGTSFGANRNVSGEAVFTTSPVGYVESLTDPSYKQQILIFTQPLIGNYGVPDCKKRDENGLLRHFESPHIQCAGVVVNDYATKYSHWTAVESLGEWCAREGVAAITGVDTRAIVTFLREQGSSLAKISIGEEYDANDDEAFINPEEVNLVSQVSTREPFFVSGGDGMLNIAVIDCGVKENILRSLVSRGASVTVFPFDYPIQNVASNYDGIFLTNGPGDPTHLTKTVNNLRELMNTYNGPIMGICMGHQLLALSTGAKTIKLKYGNRGHNIPALDIASGNCHITSQNHGYAVDASTLPAEWKATWTNLNDQSNEGIAHVSRPISSVQFHPEARGGPMDTFYLFDNYIKEAIKYQKSRTA.

The N-terminal 17 residues, 1-17 (MLRFLKPFPLRFGKRFY), are a transit peptide targeting the mitochondrion. L-glutamine-binding residues include S88, G272, and G274. In terms of domain architecture, Glutamine amidotransferase type-1 spans 225–412 (NIAVIDCGVK…IKEAIKYQKS (188 aa)). The active-site Nucleophile is the C301. L-glutamine contacts are provided by M302, Q305, N343, G345, and Y346. Catalysis depends on residues H385 and E387.

Belongs to the CarA family. In terms of assembly, heterodimer composed of 2 chains; the small (or glutamine) chain promotes the hydrolysis of glutamine to ammonia, which is used by the large (or ammonia) chain to synthesize carbamoyl phosphate.

The protein localises to the mitochondrion. It localises to the cytoplasm. The catalysed reaction is hydrogencarbonate + L-glutamine + 2 ATP + H2O = carbamoyl phosphate + L-glutamate + 2 ADP + phosphate + 2 H(+). The enzyme catalyses L-glutamine + H2O = L-glutamate + NH4(+). The protein operates within amino-acid biosynthesis; L-arginine biosynthesis; carbamoyl phosphate from bicarbonate: step 1/1. In terms of biological role, small subunit of the arginine-specific carbamoyl phosphate synthase (CPSase). CPSase catalyzes the formation of carbamoyl phosphate from the ammonia moiety of glutamine, carbonate, and phosphate donated by ATP, the first step of the arginine biosynthetic pathway. The small subunit (glutamine amidotransferase) binds and cleaves glutamine to supply the large subunit with the substrate ammonia. The protein is Carbamoyl phosphate synthase arginine-specific small chain (arg5) of Schizosaccharomyces pombe (strain 972 / ATCC 24843) (Fission yeast).